The primary structure comprises 248 residues: Phosphomannomutase (248 aa).

The active-site Nucleophile is the Asp12. Residues Asp12 and Asp14 each contribute to the Mg(2+) site. Asp14 serves as the catalytic Proton donor/acceptor. 6 residues coordinate alpha-D-mannose 1-phosphate: Arg21, Arg123, Arg134, Arg141, Ser179, and Asp181. 3 residues coordinate Mg(2+): Asp207, Phe219, and Thr224.

It belongs to the eukaryotic PMM family. As to quaternary structure, homodimer. Requires Mg(2+) as cofactor.

It localises to the cytoplasm. The enzyme catalyses alpha-D-mannose 1-phosphate = D-mannose 6-phosphate. It functions in the pathway nucleotide-sugar biosynthesis; GDP-alpha-D-mannose biosynthesis; alpha-D-mannose 1-phosphate from D-fructose 6-phosphate: step 2/2. In terms of biological role, catalyzes the interconversion of mannose-6-phosphate to mannose-1-phosphate, the precursor for the synthesis of GDP-mannose. GDP-mannose is an essential sugar nucleotide for the synthesis of D-mannose-containing cell wall polysaccharides (galactomannans and glucomannans), glycolipids, glycoproteins and the antioxidant L-ascorbate. The protein is Phosphomannomutase of Spinacia oleracea (Spinach).